Consider the following 235-residue polypeptide: Purine nucleoside phosphorylase DeoD-type (235 aa).

H4 lines the a purine D-ribonucleoside pocket. Residues G20, R24, R43, and 87-90 (RVGT) each bind phosphate. A purine D-ribonucleoside contacts are provided by residues 179–181 (EME) and 203–204 (SD). Catalysis depends on D204, which acts as the Proton donor.

The protein belongs to the PNP/UDP phosphorylase family. Homohexamer; trimer of homodimers.

The enzyme catalyses a purine D-ribonucleoside + phosphate = a purine nucleobase + alpha-D-ribose 1-phosphate. It catalyses the reaction a purine 2'-deoxy-D-ribonucleoside + phosphate = a purine nucleobase + 2-deoxy-alpha-D-ribose 1-phosphate. Functionally, catalyzes the reversible phosphorolytic breakdown of the N-glycosidic bond in the beta-(deoxy)ribonucleoside molecules, with the formation of the corresponding free purine bases and pentose-1-phosphate. This chain is Purine nucleoside phosphorylase DeoD-type, found in Exiguobacterium sibiricum (strain DSM 17290 / CCUG 55495 / CIP 109462 / JCM 13490 / 255-15).